A 229-amino-acid polypeptide reads, in one-letter code: PKHD-type hydroxylase Nham_1514 (229 aa).

The 103-residue stretch at 78 to 180 (QIFPPLFNRY…RVASFFWLQS (103 aa)) folds into the Fe2OG dioxygenase domain. Positions 98, 100, and 161 each coordinate Fe cation. Arg-171 serves as a coordination point for 2-oxoglutarate.

It depends on Fe(2+) as a cofactor. L-ascorbate serves as cofactor.

The polypeptide is PKHD-type hydroxylase Nham_1514 (Nitrobacter hamburgensis (strain DSM 10229 / NCIMB 13809 / X14)).